A 320-amino-acid chain; its full sequence is Phospho-N-acetylmuramoyl-pentapeptide-transferase (320 aa).

Transmembrane regions (helical) follow at residues Phe-6–Gly-26, Met-54–Leu-74, Leu-81–Ile-101, Leu-117–Ser-137, Ile-145–Phe-165, Ile-175–Phe-195, Ile-200–Asn-220, Ile-226–Leu-246, Phe-251–Val-271, and Arg-300–Phe-320.

The protein belongs to the glycosyltransferase 4 family. MraY subfamily. Mg(2+) is required as a cofactor.

Its subcellular location is the cell membrane. The catalysed reaction is UDP-N-acetyl-alpha-D-muramoyl-L-alanyl-gamma-D-glutamyl-L-lysyl-D-alanyl-D-alanine + di-trans,octa-cis-undecaprenyl phosphate = Mur2Ac(oyl-L-Ala-gamma-D-Glu-L-Lys-D-Ala-D-Ala)-di-trans,octa-cis-undecaprenyl diphosphate + UMP. It participates in cell wall biogenesis; peptidoglycan biosynthesis. Catalyzes the initial step of the lipid cycle reactions in the biosynthesis of the cell wall peptidoglycan: transfers peptidoglycan precursor phospho-MurNAc-pentapeptide from UDP-MurNAc-pentapeptide onto the lipid carrier undecaprenyl phosphate, yielding undecaprenyl-pyrophosphoryl-MurNAc-pentapeptide, known as lipid I. The sequence is that of Phospho-N-acetylmuramoyl-pentapeptide-transferase from Latilactobacillus sakei subsp. sakei (strain 23K) (Lactobacillus sakei subsp. sakei).